The primary structure comprises 96 residues: Small ribosomal subunit protein bS6 (96 aa).

Belongs to the bacterial ribosomal protein bS6 family.

Functionally, binds together with bS18 to 16S ribosomal RNA. The protein is Small ribosomal subunit protein bS6 of Mycolicibacterium paratuberculosis (strain ATCC BAA-968 / K-10) (Mycobacterium paratuberculosis).